A 343-amino-acid chain; its full sequence is Glyceraldehyde-3-phosphate dehydrogenase (343 aa).

Residues 12–13 and Gly114 contribute to the NAD(+) site; that span reads SI. A D-glyceraldehyde 3-phosphate-binding site is contributed by 143 to 145; sequence SCN. Cys144 functions as the Nucleophile in the catalytic mechanism. Arg172 contacts NAD(+). Residue 198–199 participates in D-glyceraldehyde 3-phosphate binding; the sequence is HG. An NAD(+)-binding site is contributed by Gln307.

This sequence belongs to the glyceraldehyde-3-phosphate dehydrogenase family. As to quaternary structure, homotetramer.

It is found in the cytoplasm. The enzyme catalyses D-glyceraldehyde 3-phosphate + phosphate + NADP(+) = (2R)-3-phospho-glyceroyl phosphate + NADPH + H(+). It carries out the reaction D-glyceraldehyde 3-phosphate + phosphate + NAD(+) = (2R)-3-phospho-glyceroyl phosphate + NADH + H(+). It functions in the pathway carbohydrate degradation; glycolysis; pyruvate from D-glyceraldehyde 3-phosphate: step 1/5. This chain is Glyceraldehyde-3-phosphate dehydrogenase (gap), found in Methanocaldococcus jannaschii (strain ATCC 43067 / DSM 2661 / JAL-1 / JCM 10045 / NBRC 100440) (Methanococcus jannaschii).